Reading from the N-terminus, the 100-residue chain is Small ribosomal subunit protein eS24 (100 aa).

This sequence belongs to the eukaryotic ribosomal protein eS24 family.

This chain is Small ribosomal subunit protein eS24, found in Methanothermobacter thermautotrophicus (strain ATCC 29096 / DSM 1053 / JCM 10044 / NBRC 100330 / Delta H) (Methanobacterium thermoautotrophicum).